The following is a 185-amino-acid chain: Large ribosomal subunit protein uL5 (185 aa).

The protein belongs to the universal ribosomal protein uL5 family. Part of the 50S ribosomal subunit; part of the 5S rRNA/L5/L18/L25 subcomplex. Contacts the 5S rRNA and the P site tRNA. Forms a bridge to the 30S subunit in the 70S ribosome.

This is one of the proteins that bind and probably mediate the attachment of the 5S RNA into the large ribosomal subunit, where it forms part of the central protuberance. In the 70S ribosome it contacts protein S13 of the 30S subunit (bridge B1b), connecting the 2 subunits; this bridge is implicated in subunit movement. Contacts the P site tRNA; the 5S rRNA and some of its associated proteins might help stabilize positioning of ribosome-bound tRNAs. The chain is Large ribosomal subunit protein uL5 from Bradyrhizobium sp. (strain BTAi1 / ATCC BAA-1182).